The chain runs to 258 residues: Acetylglutamate kinase (258 aa).

Substrate is bound by residues 44 to 45 (GG), Arg-66, and Asn-158. ATP contacts are provided by residues 181 to 186 (DVSGIL) and 209 to 211 (IIT).

It belongs to the acetylglutamate kinase family. ArgB subfamily. As to quaternary structure, homodimer.

The protein resides in the cytoplasm. The catalysed reaction is N-acetyl-L-glutamate + ATP = N-acetyl-L-glutamyl 5-phosphate + ADP. The protein operates within amino-acid biosynthesis; L-arginine biosynthesis; N(2)-acetyl-L-ornithine from L-glutamate: step 2/4. Catalyzes the ATP-dependent phosphorylation of N-acetyl-L-glutamate. This Citrobacter koseri (strain ATCC BAA-895 / CDC 4225-83 / SGSC4696) protein is Acetylglutamate kinase.